A 1391-amino-acid chain; its full sequence is MPAYFQRPENALKRANEFLEVGKKQPALDVLYDVIKSKKHRTWQKIHEPIMLKYLELCVDLRKSHLAKEGLYQYKNICQQVNIKSLEDVVRAYLKLAEERTEAAKESSQQMVLDIEDLDNIQTPESVLLSAVSGEDTQDRTDRLLLTPWVKFLWESYRQCLDLLRNNSKVERLYHDIAQQAFKFCLLYTRKAEFRKLCDNLRMHLSQIQRHHNQSTAINLNNPESQSMHLETRLVQLDSAISMELWQEAFKAVEDIHGLFALSKKPPKPQLMANYYNKVSTVFWKSGNTLFHASTLHRLYHLSREMRKNLTQEEMQRMSTRVLLATLSIPITPERTDIARLLDMDGIILEKQRRLATLLGLQAPPTRVGLINDMVRFNMLQYVVPEVKELYNWLEMDFHPLKLCTRVTKVLDWVKEQAEKEPELQQYVPQLQSNTILRLLQQVAQLYQTIEFSRLASLVPFVDAFLLERAIVDAARHCDLQVRIDHSSRTLSFGSDLNYSTREDAPFGPFLQNMPSEQIRNQLTAMSCVLSKAVGAIKPAHVLQEKEEQHQIAITAYQKNSRKEHQRILARRQTIEERKERLENLNIQREKEEMEQKEAELQKVRKAEEERLRQEAKEREKERILQEHEQIKKKTVRERLEQIKKTELGAKAFKDIDIENLEELDPDFIMAKQVEQLEKEKKELQERLKNQEKKIDYFERAKRLEEIPLLKKAYEEQRINDMELWELQEEERISTLLLEREKAVEHKNRMSRMVEDKELFVSKLKASRQSLYEAKLKQFQERLAEEKAARLEERKRERKEERRVNYYRDKEEEEERLREEQLKQEREEQEKVENEKREAEQRDYQERLKKLEEQERKKRQRELEIEERERKREEERRGGDDTFRKDSSRWGEREESGWRRGADPDERKQVPPERDWRRGGPDSKPVINEDASNREEDENAALRKDEEQVSSRAFEEKVSLPDADEEKGGSWRDEDRGPKRGLEEDRGPRRGIDDAGPRRGFEEDRGPRRGIEDDRAPRRGFDDDRGPRRGFDDDRGPRRGFDEDRGPRRGIDDDRGPRRGFDEDRTPRRGFDDDRGPRRGFDDDRGPRRGFDEDRGPRRGFEDDRGPRRGFEDDRGPRRGFEDDRGPRRGFEDDRGPRRGFEDDRGPRRGFDEDRGPRRGFEDDRGPRRGFDEDRTPRRGFDDDRGPRRGLDEDRGSWRGGDDVPRRGADDDRGPRRGADDDRGPRRGEDRDQTPWKPMAASRPGGWREREKAREDSWGPPRDSQAPEEREWSRQGEDSEKDSERDRRPVREESAWRRGGDNSETPRKPSPGDSDRKDDSDKKRPPKTDEANPWRRGEDKDSREEERGTPRRAPAADREKSAWRTEKKEEKDTPRRIKPETDEDGWTTVRR.

One can recognise a PCI domain in the interval 315-498 (MQRMSTRVLL…RTLSFGSDLN (184 aa)). Composition is skewed to basic and acidic residues over residues 809–921 (DKEE…RGGP), 940–959 (AALRKDEEQVSSRAFEEKVS), 966–1234 (EKGG…RDQT), 1246–1257 (GWREREKAREDS), 1265–1307 (QAPE…ETPR), and 1313–1380 (DSDR…IKPE). Positions 809 to 1391 (DKEEEEERLR…DEDGWTTVRR (583 aa)) are disordered. 2 repeat units span residues 973 to 982 (DEDRGPKRGL) and 983 to 992 (EEDRGPRRGI). The interval 973–1229 (DEDRGPKRGL…DDDRGPRRGE (257 aa)) is 26 X 10 AA approximate tandem repeats of [DE]-[DE]-[DE]-R-[GATV]-[PS]-[KRW]-R-G-[AEFGIL]. One copy of the 3; approximate repeat lies at 993 to 1001 (DDAGPRRGF). A run of 20 repeats spans residues 1002–1011 (EEDRGPRRGI), 1012–1021 (EDDRAPRRGF), 1022–1031 (DDDRGPRRGF), 1032–1041 (DDDRGPRRGF), 1042–1051 (DEDRGPRRGI), 1052–1061 (DDDRGPRRGF), 1062–1071 (DEDRTPRRGF), 1072–1081 (DDDRGPRRGF), 1082–1091 (DDDRGPRRGF), 1092–1101 (DEDRGPRRGF), 1102–1111 (EDDRGPRRGF), 1112–1120 (EDDRGPRRG), 1122–1131 (EDDRGPRRGF), 1132–1141 (EDDRGPRRGF), 1142–1151 (EDDRGPRRGF), 1152–1161 (DEDRGPRRGF), 1162–1171 (EDDRGPRRGF), 1172–1181 (DEDRTPRRGF), 1182–1191 (DDDRGPRRGL), and 1192–1201 (DEDRGSWRGG). The 24; approximate repeat unit spans residues 1202–1209 (DDVPRRGA). Repeat copies occupy residues 1210–1219 (DDDRGPRRGA) and 1220–1229 (DDDRGPRRGE).

Belongs to the eIF-3 subunit A family. In terms of assembly, component of the eukaryotic translation initiation factor 3 (eIF-3) complex, which is composed of 13 subunits: eif3a, eif3b, eif3c, eif3d, eif3e, eif3f, eif3g, eif3h, eif3i, eif3j, eif3k, eif3l and eif3m.

The protein localises to the cytoplasm. In terms of biological role, RNA-binding component of the eukaryotic translation initiation factor 3 (eIF-3) complex, which is involved in protein synthesis of a specialized repertoire of mRNAs and, together with other initiation factors, stimulates binding of mRNA and methionyl-tRNAi to the 40S ribosome. The eIF-3 complex specifically targets and initiates translation of a subset of mRNAs involved in cell proliferation. The polypeptide is Eukaryotic translation initiation factor 3 subunit A (eif3a) (Xenopus tropicalis (Western clawed frog)).